Reading from the N-terminus, the 381-residue chain is MLLSIGMLMLSATQVYTILTVQLFAFLNLLPVEADILAYNFENASQTFEDLPARFGYRLPAEGLKGFLINSKPENACEPIVPPPLKDNSSGTFIVLIRRLDCNFDIKVLNAQRAGYKAAIVHNVDSDDLISMGSNDIDTLKKIDIPSVFIGESSANSLKDEFTYEKGGHIILVPELSLPLEYYLIPFLIIVGICLILIVIFMITKFVQDRHRNRRNRLRKDQLKKLPVHKFKKGDEYDVCAICLEEYEDGDKLRILPCSHAYHCKCVDPWLTKTKKTCPVCKQKVVPSQGDSDSDTDSSQEENQVSEHTPLLPPSASARTQSFGSLSESHSHHNMTESSDYEDDDNEETDSSDADNEITDHSVVVQLQPNGEQDYNIANTV.

A signal peptide spans Met-1–Ala-34. Residues Asp-35 to Tyr-182 are Lumenal-facing. One can recognise a PA domain in the interval Leu-64–Asp-160. Asn-88 carries N-linked (GlcNAc...) asparagine glycosylation. The chain crosses the membrane as a helical span at residues Tyr-183–Ile-203. Residues Thr-204–Val-381 are Cytoplasmic-facing. The segment at Cys-240–Lys-282 adopts an RING-type; atypical zinc-finger fold. Residues Val-285–Val-381 form a disordered region. The segment covering Ser-317–Glu-328 has biased composition (polar residues). The segment covering Ser-339–Glu-357 has biased composition (acidic residues). Positions Val-365–Val-381 are enriched in polar residues.

In terms of assembly, interacts with ERN1. Autoubiquitinated. In terms of processing, N-glycosylated and also modified with chondroitin sulfate. Expressed in the brain, heart, kidney, liver and spleen. Higher expression in adult tissues compared to the embryonic counterparts.

Its subcellular location is the endoplasmic reticulum membrane. The protein resides in the late endosome membrane. The protein localises to the lysosome membrane. It is found in the nucleus inner membrane. The enzyme catalyses S-ubiquitinyl-[E2 ubiquitin-conjugating enzyme]-L-cysteine + [acceptor protein]-L-lysine = [E2 ubiquitin-conjugating enzyme]-L-cysteine + N(6)-ubiquitinyl-[acceptor protein]-L-lysine.. The protein operates within protein modification; protein ubiquitination. Functionally, E3 ubiquitin-protein ligase that regulates cell proliferation. Involved in apoptosis regulation. Mediates ER stress-induced activation of JNK signaling pathway and apoptosis by promoting ERN1 activation and splicing of XBP1 mRNA. Also involved in protein trafficking and localization. The chain is E3 ubiquitin-protein ligase RNF13 (Rnf13) from Mus musculus (Mouse).